Reading from the N-terminus, the 405-residue chain is Peroxisomal membrane protein PEX13 (405 aa).

Residues 1-11 (MASQPPPPPKP) are compositionally biased toward pro residues. Residues 1-71 (MASQPPPPPK…SQQTGSNNVN (71 aa)) form a disordered region. The Peroxisomal matrix portion of the chain corresponds to 1–136 (MASQPPPPPK…SSRGAFQSIE (136 aa)). The segment covering 61–71 (PSQQTGSNNVN) has biased composition (polar residues). A helical membrane pass occupies residues 137-157 (SIVHAFASVSMMMDATFSAVY). Residues 147–235 (MMMDATFSAV…EDQATNSAKS (89 aa)) are targeting to peroxisomes. The Cytoplasmic portion of the chain corresponds to 158–176 (NSFRAVLDVANHFSRLKIH). A helical transmembrane segment spans residues 177–194 (FTKVFSAFALVRTIRYLY). The interval 177 to 198 (FTKVFSAFALVRTIRYLYRRLQ) is interaction with PEX19. At 195 to 235 (RRLQWMMGLRRGSENEDLWAESEGTVACLSAEDQATNSAKS) the chain is on the peroxisomal matrix side. A helical membrane pass occupies residues 236 to 256 (WPIFLFFAVILGGPYLIWKLL). At 257–405 (STHNDEVTDN…TGKNGDKQDL (149 aa)) the chain is on the cytoplasmic side. One can recognise an SH3 domain in the interval 274-338 (DDHVVARAEY…PANYVKILGK (65 aa)). The residue at position 356 (Ser-356) is a Phosphoserine.

Belongs to the peroxin-13 family. Interacts (via SH3 domain) with PEX14 (via SH3-binding motif); forming the PEX13-PEX14 docking complex. Interacts with PEX19.

Its subcellular location is the peroxisome membrane. Component of the PEX13-PEX14 docking complex, a translocon channel that specifically mediates the import of peroxisomal cargo proteins bound to PEX5 receptor. The PEX13-PEX14 docking complex forms a large import pore which can be opened to a diameter of about 9 nm. Mechanistically, PEX5 receptor along with cargo proteins associates with the PEX14 subunit of the PEX13-PEX14 docking complex in the cytosol, leading to the insertion of the receptor into the organelle membrane with the concomitant translocation of the cargo into the peroxisome matrix. Involved in the import of PTS1- and PTS2-type containing proteins. This is Peroxisomal membrane protein PEX13 from Mus musculus (Mouse).